A 419-amino-acid chain; its full sequence is L-rhamnose isomerase (419 aa).

Positions 262, 294, and 296 each coordinate Mn(2+).

It belongs to the rhamnose isomerase family. As to quaternary structure, homotetramer. Mn(2+) is required as a cofactor.

It is found in the cytoplasm. It catalyses the reaction L-rhamnopyranose = L-rhamnulose. It functions in the pathway carbohydrate degradation; L-rhamnose degradation; glycerone phosphate from L-rhamnose: step 1/3. In terms of biological role, catalyzes the interconversion of L-rhamnose and L-rhamnulose. This is L-rhamnose isomerase from Escherichia coli (strain K12 / MC4100 / BW2952).